Reading from the N-terminus, the 336-residue chain is Probable carboxylesterase 6 (336 aa).

The segment at 1–20 is disordered; it reads MGGTKLTHVTTTNPNNSNIH. Over residues 7-19 the composition is skewed to polar residues; the sequence is THVTTTNPNNSNI. Positions 96-98 match the Involved in the stabilization of the negatively charged intermediate by the formation of the oxyanion hole motif; that stretch reads HGG. Active-site residues include Ser176, Asp276, and His303.

Belongs to the 'GDXG' lipolytic enzyme family. As to expression, expressed in roots, leaves, flowers and siliques.

It catalyses the reaction a carboxylic ester + H2O = an alcohol + a carboxylate + H(+). In terms of biological role, carboxylesterase acting on esters with varying acyl chain length. The polypeptide is Probable carboxylesterase 6 (CXE6) (Arabidopsis thaliana (Mouse-ear cress)).